We begin with the raw amino-acid sequence, 208 residues long: Small ribosomal subunit protein uS4 (208 aa).

Residues 97-160 (TRLDNVCYRM…QKQLRVQEAL (64 aa)) form the S4 RNA-binding domain.

It belongs to the universal ribosomal protein uS4 family. Part of the 30S ribosomal subunit. Contacts protein S5. The interaction surface between S4 and S5 is involved in control of translational fidelity.

In terms of biological role, one of the primary rRNA binding proteins, it binds directly to 16S rRNA where it nucleates assembly of the body of the 30S subunit. Its function is as follows. With S5 and S12 plays an important role in translational accuracy. The protein is Small ribosomal subunit protein uS4 of Xanthomonas axonopodis pv. citri (strain 306).